Here is a 175-residue protein sequence, read N- to C-terminus: Adenine phosphoribosyltransferase (175 aa).

The protein belongs to the purine/pyrimidine phosphoribosyltransferase family. In terms of assembly, homodimer.

The protein resides in the cytoplasm. It carries out the reaction AMP + diphosphate = 5-phospho-alpha-D-ribose 1-diphosphate + adenine. The protein operates within purine metabolism; AMP biosynthesis via salvage pathway; AMP from adenine: step 1/1. Catalyzes a salvage reaction resulting in the formation of AMP, that is energically less costly than de novo synthesis. This Francisella philomiragia subsp. philomiragia (strain ATCC 25017 / CCUG 19701 / FSC 153 / O#319-036) protein is Adenine phosphoribosyltransferase.